We begin with the raw amino-acid sequence, 518 residues long: GMP synthase [glutamine-hydrolyzing] (518 aa).

One can recognise a Glutamine amidotransferase type-1 domain in the interval 11–203 (SILVLDFGSQ…AFDVCQAEAN (193 aa)). C88 functions as the Nucleophile in the catalytic mechanism. Catalysis depends on residues H177 and E179. One can recognise a GMPS ATP-PPase domain in the interval 204–393 (WSMDDFIDMQ…LGMPSDLVWR (190 aa)). Residue 231–237 (SGGVDSS) participates in ATP binding.

As to quaternary structure, homodimer.

The enzyme catalyses XMP + L-glutamine + ATP + H2O = GMP + L-glutamate + AMP + diphosphate + 2 H(+). It participates in purine metabolism; GMP biosynthesis; GMP from XMP (L-Gln route): step 1/1. In terms of biological role, catalyzes the synthesis of GMP from XMP. The chain is GMP synthase [glutamine-hydrolyzing] from Lactiplantibacillus plantarum (strain ATCC BAA-793 / NCIMB 8826 / WCFS1) (Lactobacillus plantarum).